The sequence spans 315 residues: MIKLGIVMDPIANINIKKDSSFAMLLEAQRRGYELHYMEMGDLYLINGEARAHTRTLNVKQNYEEWFSFVGEQDLPLADLDVILMRKDPPFDTEFIYATYILERAEEKGTLIVNKPQSLRDCNEKLFTAWFSDLTPETLVTRNKAQLKAFWEKHSDIILKPLDGMGGASIFRVKEGDPNLGVIAETLTEHGTRYCMAQNYLPAIKDGDKRVLVVDGEPVPYCLARIPQGGETRGNLAAGGRGEPRPLTESDWKIARQIGPTLKEKGLIFVGLDIIGDRLTEINVTSPTCIREIEAEFPVSITGMLMDAIEARLQQ.

An ATP-grasp domain is found at 125 to 310 (KLFTAWFSDL…ITGMLMDAIE (186 aa)). 151–207 (WEKHSDIILKPLDGMGGASIFRVKEGDPNLGVIAETLTEHGTRYCMAQNYLPAIKDG) is a binding site for ATP. The Mg(2+) site is built by Glu281 and Asn283.

It belongs to the prokaryotic GSH synthase family. It depends on Mg(2+) as a cofactor. The cofactor is Mn(2+).

The enzyme catalyses gamma-L-glutamyl-L-cysteine + glycine + ATP = glutathione + ADP + phosphate + H(+). Its pathway is sulfur metabolism; glutathione biosynthesis; glutathione from L-cysteine and L-glutamate: step 2/2. The chain is Glutathione synthetase from Escherichia coli O157:H7.